The sequence spans 443 residues: Thymidine phosphorylase (443 aa).

Belongs to the thymidine/pyrimidine-nucleoside phosphorylase family. Homodimer.

The enzyme catalyses thymidine + phosphate = 2-deoxy-alpha-D-ribose 1-phosphate + thymine. The protein operates within pyrimidine metabolism; dTMP biosynthesis via salvage pathway; dTMP from thymine: step 1/2. Functionally, the enzymes which catalyze the reversible phosphorolysis of pyrimidine nucleosides are involved in the degradation of these compounds and in their utilization as carbon and energy sources, or in the rescue of pyrimidine bases for nucleotide synthesis. The protein is Thymidine phosphorylase of Shewanella loihica (strain ATCC BAA-1088 / PV-4).